We begin with the raw amino-acid sequence, 552 residues long: Urocanate hydratase (552 aa).

NAD(+) is bound by residues 49–50 (GG), Gln-127, 173–175 (GMG), Asp-193, 239–240 (NA), 260–264 (QTSAH), 270–271 (YI), and Tyr-319. The active site involves Cys-407. Gly-489 lines the NAD(+) pocket.

This sequence belongs to the urocanase family. It depends on NAD(+) as a cofactor.

The protein localises to the cytoplasm. It catalyses the reaction 4-imidazolone-5-propanoate = trans-urocanate + H2O. It functions in the pathway amino-acid degradation; L-histidine degradation into L-glutamate; N-formimidoyl-L-glutamate from L-histidine: step 2/3. In terms of biological role, catalyzes the conversion of urocanate to 4-imidazolone-5-propionate. The protein is Urocanate hydratase of Bacillus cereus (strain G9842).